A 463-amino-acid chain; its full sequence is MAEAVFRAPKRKRRVYESYESPLPIPFSQDQSPRKEFRIFQAEMISNNVVVRGTEDMEQLYGKGYFGKGILSRSRPNFTISNPKLAARWKGVQTDMPIITSEKYQHRVEWARDFMRRQGHDESTVQKILTDYTEPLEPPYRERKGESPQHEPLSSKADSSLEGREGKDELSVTTGGAGQSDDLQGLNTHSDCRQEGPGHATLTVASPSSLNGHAIEDPEALSQIPCCSQEALGQQDDLWPEASSQIAGESRAAHEYVLIEEELCDVQEGAAPHDELLKRKRLVCRRNPYRIFEYLQLSLEEAFFLAYALGCLSIYYEKEPLTIVKLWQAFTAVQPTFRTTYMAYHYFRSKGWVPKVGLKYGTDLLLYRKGPPFYHASYSVIIELVDDNFEGSLRRPFSWKSLAALSRVSGNVSKELMLCYLIKPSTMTNEDMETPECMRRIQVQEVILSRWVSSRERSDQDEL.

S32 and S147 each carry phosphoserine. Positions 120 to 213 are disordered; the sequence is HDESTVQKIL…VASPSSLNGH (94 aa). Composition is skewed to basic and acidic residues over residues 139-149 and 159-170; these read PYRERKGESPQ and SSLEGREGKDEL. Catalysis depends on residues Y367 and H375. Residues S406, S409, and S413 each carry the phosphoserine modification. The active site involves K414.

It belongs to the tRNA-intron endonuclease family. In terms of assembly, tRNA splicing endonuclease is a heterotetramer composed of TSEN2, TSEN15, TSEN34/LENG5 and TSEN54. tRNA splicing endonuclease complex also contains proteins of the pre-mRNA 3'-end processing machinery such as CLP1, CPSF1, CPSF4 and CSTF2.

Its subcellular location is the nucleus. The protein resides in the nucleolus. The catalysed reaction is pretRNA = a 3'-half-tRNA molecule with a 5'-OH end + a 5'-half-tRNA molecule with a 2',3'-cyclic phosphate end + an intron with a 2',3'-cyclic phosphate and a 5'-hydroxyl terminus.. Constitutes one of the two catalytic subunit of the tRNA-splicing endonuclease complex, a complex responsible for identification and cleavage of the splice sites in pre-tRNA. It cleaves pre-tRNA at the 5'- and 3'-splice sites to release the intron. The products are an intron and two tRNA half-molecules bearing 2',3'-cyclic phosphate and 5'-OH termini. There are no conserved sequences at the splice sites, but the intron is invariably located at the same site in the gene, placing the splice sites an invariant distance from the constant structural features of the tRNA body. Probably carries the active site for 5'-splice site cleavage. The tRNA splicing endonuclease is also involved in mRNA processing via its association with pre-mRNA 3'-end processing factors, establishing a link between pre-tRNA splicing and pre-mRNA 3'-end formation, suggesting that the endonuclease subunits function in multiple RNA-processing events. This chain is tRNA-splicing endonuclease subunit Sen2 (Tsen2), found in Rattus norvegicus (Rat).